We begin with the raw amino-acid sequence, 363 residues long: MKIGVFVPIGNNGWLISTHAPQYMPTFELNKAIVQKAEHYHFDFALSMIKLRGFGGKTEFWDHNLESFTLMAGLAAVTSRIQIYATAATLTLPPAIVARMAATIDSISGGRFGVNLVTGWQKPEYEQMGIWPGDDYFSRRYDYLTEYVQVLRDLWGTGKSDFKGDFFTMNDCRVSPQPSVPMKVICAGQSDAGMAFSAQYADFNFCFGKGVNTPTAFAPTAARMKQAAEQTGRDVGSYVLFMVIADETDDAARAKWEHYKAGADEEALSWLTEQSQKDTRSGTDTNVRQMADPTSAVNINMGTLVGSYASVARMLDEVASVPGAEGVLLTFDDFLSGIETFGERIQPLMQCRAHLPVLTQEVA.

Residues 49-50, Asn115, Glu124, 140-141, and Ser190 contribute to the FMN site; these read IK and RY.

The protein belongs to the NtaA/SnaA/DszA monooxygenase family. RutA subfamily.

It catalyses the reaction uracil + FMNH2 + NADH + O2 = (Z)-3-ureidoacrylate + FMN + NAD(+) + H2O + H(+). The enzyme catalyses thymine + FMNH2 + NADH + O2 = (Z)-2-methylureidoacrylate + FMN + NAD(+) + H2O + H(+). Its function is as follows. Catalyzes the pyrimidine ring opening between N-3 and C-4 by an unusual flavin hydroperoxide-catalyzed mechanism, adding oxygen atoms in the process to yield ureidoacrylate peracid, that immediately reacts with FMN forming ureidoacrylate and FMN-N(5)-oxide. The FMN-N(5)-oxide reacts spontaneously with NADH to produce FMN. Requires the flavin reductase RutF to regenerate FMN in vivo. In Escherichia coli O157:H7 (strain EC4115 / EHEC), this protein is Pyrimidine monooxygenase RutA.